An 82-amino-acid chain; its full sequence is Small ribosomal subunit protein bS16 (82 aa).

It belongs to the bacterial ribosomal protein bS16 family.

The polypeptide is Small ribosomal subunit protein bS16 (Methylobacillus flagellatus (strain ATCC 51484 / DSM 6875 / VKM B-1610 / KT)).